An 829-amino-acid chain; its full sequence is Periplasmic nitrate reductase (829 aa).

A signal peptide spans 1–30 (MNSPRPTPPPFAAAAAGLPILVRASNLVTE). A 4Fe-4S Mo/W bis-MGD-type domain is found at 36–92 (LVWNKAPCRFCGTGCSVMVATRDGQVVATHGDIKAEVNRGINCVKGYFLSKIMYGSD). [4Fe-4S] cluster is bound by residues cysteine 43, cysteine 46, cysteine 50, and cysteine 78. Residues lysine 80, glutamine 147, asparagine 172, cysteine 176, 209–216 (WGSNMAEM), 240–244 (STFEH), 259–261 (QTD), methionine 370, glutamine 374, asparagine 480, 506–507 (SD), lysine 529, aspartate 556, and 716–725 (TGRVLEHWHT) contribute to the Mo-bis(molybdopterin guanine dinucleotide) site. Phenylalanine 792 serves as a coordination point for substrate. Asparagine 800 and lysine 817 together coordinate Mo-bis(molybdopterin guanine dinucleotide).

This sequence belongs to the prokaryotic molybdopterin-containing oxidoreductase family. NasA/NapA/NarB subfamily. As to quaternary structure, component of the periplasmic nitrate reductase NapAB complex composed of NapA and NapB. It depends on [4Fe-4S] cluster as a cofactor. Mo-bis(molybdopterin guanine dinucleotide) is required as a cofactor.

It localises to the periplasm. The catalysed reaction is 2 Fe(II)-[cytochrome] + nitrate + 2 H(+) = 2 Fe(III)-[cytochrome] + nitrite + H2O. In terms of biological role, catalytic subunit of the periplasmic nitrate reductase complex NapAB. Receives electrons from NapB and catalyzes the reduction of nitrate to nitrite. The polypeptide is Periplasmic nitrate reductase (Pseudomonas aeruginosa (strain ATCC 15692 / DSM 22644 / CIP 104116 / JCM 14847 / LMG 12228 / 1C / PRS 101 / PAO1)).